The sequence spans 401 residues: Glyceraldehyde-3-phosphate dehydrogenase A, chloroplastic (401 aa).

Residues 1–65 constitute a chloroplast transit peptide; it reads MASNMLSIAN…RSSQNGVVEA (65 aa). Residues 76 to 77, Asp100, and Arg145 each bind NADP(+); that span reads RI. Residues 217-219, Thr248, Arg263, 276-277, and Arg299 each bind D-glyceraldehyde 3-phosphate; these read SCT and TG. The Nucleophile role is filled by Cys218. Asn381 lines the NADP(+) pocket.

It belongs to the glyceraldehyde-3-phosphate dehydrogenase family. Tetramer of either four A chains (GAPDH 2) or two A and two B chains (GAPDH 1).

Its subcellular location is the plastid. The protein resides in the chloroplast. It carries out the reaction D-glyceraldehyde 3-phosphate + phosphate + NADP(+) = (2R)-3-phospho-glyceroyl phosphate + NADPH + H(+). It participates in carbohydrate biosynthesis; Calvin cycle. This chain is Glyceraldehyde-3-phosphate dehydrogenase A, chloroplastic (GAPA), found in Spinacia oleracea (Spinach).